The sequence spans 207 residues: Claudin-11 (207 aa).

Met-1 is a topological domain (cytoplasmic). The helical transmembrane segment at 2-22 threads the bilayer; it reads VATCLQVVGFVTSFVGWIGII. Residues 23–82 are Extracellular-facing; the sequence is VTTSTNDWVVTCSYTIPTCRKMDELGSKGLWADCVMATGLHHCKPLVDILILPGYAQACR. The chain crosses the membrane as a helical span at residues 83-103; it reads ALMIAASVLGLPGILLLLTVL. At 104–122 the chain is on the cytoplasmic side; that stretch reads PCIRMGHEPGVAKYRRAQL. A helical membrane pass occupies residues 123-143; that stretch reads AGVLLILLALCAIVATIWFPV. At 144–157 the chain is on the extracellular side; it reads CAHREITIVSFGYS. The chain crosses the membrane as a helical span at residues 158–178; that stretch reads LYAGWIGAVMCLVGGCVIVCC. At 179-207 the chain is on the cytoplasmic side; sequence SGDAQSFGENRFYYSSGSSSPTHAKSAHV. Ser-193, Ser-194, Ser-197, and Ser-198 each carry phosphoserine.

The protein belongs to the claudin family. In terms of assembly, interacts with tetraspanin-3/TSPAN3. Interacts with OCLN.

The protein localises to the cell junction. It localises to the tight junction. Its subcellular location is the cell membrane. In terms of biological role, plays a major role in tight junction-specific obliteration of the intercellular space, through calcium-independent cell-adhesion activity. In Rattus norvegicus (Rat), this protein is Claudin-11 (Cldn11).